A 397-amino-acid polypeptide reads, in one-letter code: Acetate kinase (397 aa).

Asn-7 provides a ligand contact to Mg(2+). Residue Lys-14 coordinates ATP. Arg-90 contacts substrate. The Proton donor/acceptor role is filled by Asp-147. ATP contacts are provided by residues 207–211, 282–284, and 330–334; these read HLGNG, DFR, and GLGEN. Mg(2+) is bound at residue Glu-383.

Belongs to the acetokinase family. As to quaternary structure, homodimer. It depends on Mg(2+) as a cofactor. Requires Mn(2+) as cofactor.

Its subcellular location is the cytoplasm. It carries out the reaction acetate + ATP = acetyl phosphate + ADP. It functions in the pathway metabolic intermediate biosynthesis; acetyl-CoA biosynthesis; acetyl-CoA from acetate: step 1/2. In terms of biological role, catalyzes the formation of acetyl phosphate from acetate and ATP. Can also catalyze the reverse reaction. The polypeptide is Acetate kinase (Clostridium botulinum (strain ATCC 19397 / Type A)).